Reading from the N-terminus, the 184-residue chain is MSRQNPVRSTRGNSLRAREAQQAQDAPLFQESSSNVFVVEKVLNKRLTRGGSEYYIKWQGFPESECSWEPIENLQCDRMIQEYEKEAAKRTTRKRRYSPQPSTSSSAELQPSTSDEWAGKTLKTIIGITKAPGELHFLCKFSDDSVHLIPLREANVRFPSQVIKFYETRLVLQGVSPTIPGGMS.

Residues 1 to 13 are compositionally biased toward polar residues; it reads MSRQNPVRSTRGN. 2 disordered regions span residues 1–27 and 87–115; these read MSRQNPVRSTRGNSLRAREAQQAQDAP and AAKRTTRKRRYSPQPSTSSSAELQPSTSD. The 59-residue stretch at 37 to 95 folds into the Chromo domain; that stretch reads FVVEKVLNKRLTRGGSEYYIKWQGFPESECSWEPIENLQCDRMIQEYEKEAAKRTTRKR. The span at 99–115 shows a compositional bias: polar residues; the sequence is PQPSTSSSAELQPSTSD.

As to quaternary structure, interacts with histone demethylase spr-5. Interacts with chromobox protein homolog hpl-2. Interacts with histone H3 tails methylated at 'Lys-9' (H3K9me3) and 'Lys-23'(H3K23me2). Interacts with histone H1 variant his-24 (when monomethylated at 'Lys-14'); the interaction is direct. May interact with the REST corepressor rcor-1, histone deacetylase hda-1, and the histone demethylase lsd-1.

It is found in the nucleus. Seems to be involved in transcriptional silencing in heterochromatin-like complexes. Involved in epigenetic repression. Probably does not act as global transcriptional repressor. Plays a role in linking epigenetic regulation with the innate immune response. Acting in concert with chromobox protein homolog hpl-2 and histone H1 protein his-24, involved in reproduction, somatic gonad development, male tail development and vulval cell fate decisions; perhaps as a result of modulating expression of Hox genes mab-5 and egl-5. Role in growth and somatic gonad development is antagonized by histone-lysine N-methyltransferase set-2/SET1. Required for larval development, acting redundantly with hpl-2. Plays a role in the formation of the vulva and in fertility, acting together with a CoREST-like complex, and hpl-2. In Caenorhabditis elegans, this protein is Chromobox protein homolog hpl-1.